The following is a 363-amino-acid chain: Putative agmatine deiminase (363 aa).

Positions 1-10 (MTKQLSTSPK) are enriched in polar residues. A disordered region spans residues 1–20 (MTKQLSTSPKQDGFRMPAEH). Cys355 acts as the Amidino-cysteine intermediate in catalysis.

The protein belongs to the agmatine deiminase family.

The catalysed reaction is agmatine + H2O = N-carbamoylputrescine + NH4(+). This is Putative agmatine deiminase from Photobacterium profundum (strain SS9).